The sequence spans 884 residues: Pyruvate, phosphate dikinase (884 aa).

Residues 1–351 (MSTRRVYFFG…LWMLQARAGK (351 aa)) are N-terminal. Arginine 99 is a binding site for ATP. The interval 352–408 (RTGFAMVRIAIDMCKEGMLTEEEALLRIDANKINEFLFKRFDPSVKPVVLGKGIPAS) is linker 1. The central stretch occupies residues 409 to 507 (PGAAVGVICF…KFKEGDFISI (99 aa)). At threonine 462 the chain carries Phosphothreonine; by PDRP1. Histidine 464 acts as the Tele-phosphohistidine intermediate in catalysis. The segment at 508-542 (NGTTGEIYNGAVQTIEPGITDDLQTIMDWSDKYRV) is linker 2. The interval 543 to 884 (LKIRTNADTP…IAAIKARTNQ (342 aa)) is C-terminal. Substrate contacts are provided by arginine 570, arginine 626, glutamate 753, glycine 774, threonine 775, asparagine 776, and aspartate 777. Mg(2+) is bound at residue glutamate 753. Residue aspartate 777 coordinates Mg(2+). Cysteine 839 acts as the Proton donor in catalysis.

It belongs to the PEP-utilizing enzyme family. As to quaternary structure, homodimer. It depends on Mg(2+) as a cofactor. In terms of processing, phosphorylation of Thr-462 in the dark inactivates the enzyme. Dephosphorylation upon light stimulation reactivates the enzyme.

The enzyme catalyses pyruvate + phosphate + ATP = phosphoenolpyruvate + AMP + diphosphate + H(+). With respect to regulation, activated by light-induced dephosphorylation. Inhibited by dark-induced phosphorylation. Both reactions are catalyzed by PDRP1. Its function is as follows. Catalyzes the reversible phosphorylation of pyruvate and phosphate. In Giardia intestinalis (Giardia lamblia), this protein is Pyruvate, phosphate dikinase.